A 540-amino-acid polypeptide reads, in one-letter code: SNW/SKI-interacting protein B (540 aa).

Disordered regions lie at residues 1–106, 215–273, 351–402, and 502–526; these read MVLR…SLTV, GETQ…NPKG, GAAP…RDRD, and ASVA…DPFH. Composition is skewed to basic and acidic residues over residues 16-29 and 83-94; these read PHDH…KERY and MGRRGGDGDGEQ. An SNW region spans residues 189 to 353; it reads PEFIKYTPAR…KARAEMLGAA (165 aa). A compositionally biased stretch (pro residues) spans 236–251; that stretch reads AGSPPVPVLRSPPRPP. Positions 359-382 are enriched in basic and acidic residues; the sequence is ERSKAAAERDAIREERRRERRLEA. Low complexity predominate over residues 383-393; the sequence is RAAAAAASKKS.

It belongs to the SNW family.

Its subcellular location is the nucleus. The polypeptide is SNW/SKI-interacting protein B (Oryza sativa subsp. japonica (Rice)).